A 347-amino-acid polypeptide reads, in one-letter code: Violet-sensitive opsin (347 aa).

Residues 1–31 are Extracellular-facing; it reads MLEEEDFYLFKNVSNVSPFDGPQYHIAPKWA. N-linked (GlcNAc...) asparagine glycosylation is present at asparagine 12. Residues 32-56 traverse the membrane as a helical segment; it reads FTLQAIFMGMVFLIGTPLNFIVLLV. Over 57 to 68 the chain is Cytoplasmic; sequence TIKYKKLRQPLN. Residues 69–94 form a helical membrane-spanning segment; it reads YILVNITVGGFLMCIFSIFPVFVSSS. The Extracellular portion of the chain corresponds to 95-108; that stretch reads QGYFFFGRIACSID. The cysteines at positions 105 and 182 are disulfide-linked. Residues 109–128 form a helical membrane-spanning segment; the sequence is AFVGTLTGLVTGWSLAFLAF. At 129–147 the chain is on the cytoplasmic side; the sequence is ERYIVICKPMGNFNFSSSH. Residues 148-171 form a helical membrane-spanning segment; sequence ALAVVICTWIIGIVVSVPPFLGWS. Over 172 to 197 the chain is Extracellular; that stretch reads RYMPEGLQCSCGPDWYTVGTKYRSEY. Residues 198-225 form a helical membrane-spanning segment; that stretch reads YTWFIFIFCFVIPLSLICFSYGRLLGAL. Residues 226-247 lie on the Cytoplasmic side of the membrane; the sequence is RAVAAQQQESASTQKAEREVSR. The chain crosses the membrane as a helical span at residues 248–271; that stretch reads MVIFMVGSFCLCYVPYAAMAMYMV. The Extracellular portion of the chain corresponds to 272 to 279; the sequence is TNRNHGLD. Residues 280–304 form a helical membrane-spanning segment; it reads LRLVTIPAFFSKSSCVYNPIIYSFM. Lysine 291 bears the N6-(retinylidene)lysine mark. At 305 to 347 the chain is on the cytoplasmic side; sequence NKQFRGCIMETVCGRPMSDDSSVSSTSQRTEVSTVSSSQVSPA. The disordered stretch occupies residues 323–347; that stretch reads DDSSVSSTSQRTEVSTVSSSQVSPA.

The protein belongs to the G-protein coupled receptor 1 family. Opsin subfamily. Post-translationally, phosphorylated on some or all of the serine and threonine residues present in the C-terminal region. The color pigments are found in the cone photoreceptor cells.

It is found in the membrane. Visual pigments are the light-absorbing molecules that mediate vision. They consist of an apoprotein, opsin, covalently linked to cis-retinal. This chain is Violet-sensitive opsin, found in Xenopus laevis (African clawed frog).